A 203-amino-acid polypeptide reads, in one-letter code: Dephospho-CoA kinase (203 aa).

In terms of domain architecture, DPCK spans 10–203 (IIGITGNIGS…LTGGAKGGRG (194 aa)). 18 to 23 (GSGKST) is an ATP binding site.

The protein belongs to the CoaE family.

It localises to the cytoplasm. The catalysed reaction is 3'-dephospho-CoA + ATP = ADP + CoA + H(+). The protein operates within cofactor biosynthesis; coenzyme A biosynthesis; CoA from (R)-pantothenate: step 5/5. Functionally, catalyzes the phosphorylation of the 3'-hydroxyl group of dephosphocoenzyme A to form coenzyme A. The polypeptide is Dephospho-CoA kinase (Thermus thermophilus (strain ATCC BAA-163 / DSM 7039 / HB27)).